Here is a 301-residue protein sequence, read N- to C-terminus: Probable alpha-L-glutamate ligase (301 aa).

The region spanning 104 to 287 (LQLLSRRGIG…VAGIIIEHLE (184 aa)) is the ATP-grasp domain. ATP-binding positions include lysine 141, 178–179 (EY), aspartate 187, and 211–213 (RSN). Mg(2+)-binding residues include aspartate 248, glutamate 260, and asparagine 262. Mn(2+)-binding residues include aspartate 248, glutamate 260, and asparagine 262.

Belongs to the RimK family. Requires Mg(2+) as cofactor. Mn(2+) is required as a cofactor.

This chain is Probable alpha-L-glutamate ligase, found in Pseudomonas fluorescens (strain SBW25).